Consider the following 337-residue polypeptide: Phosphate acyltransferase (337 aa).

Belongs to the PlsX family. In terms of assembly, homodimer. Probably interacts with PlsY.

The protein resides in the cytoplasm. The enzyme catalyses a fatty acyl-[ACP] + phosphate = an acyl phosphate + holo-[ACP]. It participates in lipid metabolism; phospholipid metabolism. Catalyzes the reversible formation of acyl-phosphate (acyl-PO(4)) from acyl-[acyl-carrier-protein] (acyl-ACP). This enzyme utilizes acyl-ACP as fatty acyl donor, but not acyl-CoA. The sequence is that of Phosphate acyltransferase from Hydrogenovibrio crunogenus (strain DSM 25203 / XCL-2) (Thiomicrospira crunogena).